We begin with the raw amino-acid sequence, 156 residues long: Ribosomal RNA large subunit methyltransferase H (156 aa).

S-adenosyl-L-methionine-binding positions include leucine 73, glycine 104, and leucine 123–leucine 128.

The protein belongs to the RNA methyltransferase RlmH family. In terms of assembly, homodimer.

The protein localises to the cytoplasm. The enzyme catalyses pseudouridine(1915) in 23S rRNA + S-adenosyl-L-methionine = N(3)-methylpseudouridine(1915) in 23S rRNA + S-adenosyl-L-homocysteine + H(+). Specifically methylates the pseudouridine at position 1915 (m3Psi1915) in 23S rRNA. In Pectobacterium carotovorum subsp. carotovorum (strain PC1), this protein is Ribosomal RNA large subunit methyltransferase H.